Reading from the N-terminus, the 171-residue chain is Cardioactive peptide (171 aa).

The first 26 residues, 1 to 26 (MQMYHVVLGCSLAILLVILDIPQASC), serve as a signal peptide directing secretion. Residues 27 to 49 (DDVVIQKRQVDPAEMDRLLDPKR) constitute a propeptide that is removed on maturation. Residues cysteine 54 and cysteine 60 are joined by a disulfide bond. Cysteine 60 bears the Cysteine amide mark. A propeptide spanning residues 64–171 (RSDESMGTLV…QEEITKPWSR (108 aa)) is cleaved from the precursor. Positions 116–171 (QSNQFGAGMDRPLPLPIAGYRRKRFADPESQAPAPHSNLPRATSQLQEEITKPWSR) are disordered.

As to expression, central nervous system; most neurons exhibit coexpression with burs.

The protein resides in the secreted. Its function is as follows. Cardioregulatory neurohormone that increases heart beat rate during adult wing inflation; has no effect on beat amplitude. The effect of CCAP is both ino- and chronotropic. The sequence is that of Cardioactive peptide from Periplaneta americana (American cockroach).